Consider the following 121-residue polypeptide: Large ribosomal subunit protein uL18 (121 aa).

The protein belongs to the universal ribosomal protein uL18 family. In terms of assembly, part of the 50S ribosomal subunit; part of the 5S rRNA/L5/L18/L25 subcomplex. Contacts the 5S and 23S rRNAs.

This is one of the proteins that bind and probably mediate the attachment of the 5S RNA into the large ribosomal subunit, where it forms part of the central protuberance. The protein is Large ribosomal subunit protein uL18 of Paracidovorax citrulli (strain AAC00-1) (Acidovorax citrulli).